The chain runs to 779 residues: Pleckstrin homology domain-containing family A member 4 (779 aa).

Residues 54–153 (PVHIRGWLHK…WLRALGKASR (100 aa)) enclose the PH domain. Disordered regions lie at residues 152-355 (SRAE…LPGP), 495-669 (AGLG…SGGH), and 694-766 (SPER…QEEG). Residue S164 is modified to Phosphoserine. Basic and acidic residues predominate over residues 183-193 (VNRREEGRTSE). Low complexity-rich tracts occupy residues 246–259 (PRPR…PPLS) and 324–334 (QSTQVSSGSST). A compositionally biased stretch (basic and acidic residues) spans 517–527 (QREESSERESL). Positions 528–540 (SESLELSSPQSPE) are enriched in low complexity. S562 carries the phosphoserine modification. Over residues 567 to 580 (RASSPECRQQSSPL) the composition is skewed to polar residues. Composition is skewed to low complexity over residues 608–627 (GLSL…RTLS) and 649–659 (SSGSWSSPRHS). The span at 720-740 (VTSSPTSHKANSATTGFSCQG) shows a compositional bias: polar residues.

The protein localises to the cytoplasm. Its subcellular location is the membrane. In terms of biological role, binds specifically to phosphatidylinositol 3-phosphate (PtdIns3P), but not to other phosphoinositides. This Rattus norvegicus (Rat) protein is Pleckstrin homology domain-containing family A member 4 (Plekha4).